The chain runs to 263 residues: Virulence plasmid protein pGP6-D-related protein (263 aa).

The protein belongs to the UPF0137 (pGP6-D) family.

The protein is Virulence plasmid protein pGP6-D-related protein of Chlamydia trachomatis serovar D (strain ATCC VR-885 / DSM 19411 / UW-3/Cx).